A 484-amino-acid polypeptide reads, in one-letter code: Endoglucanase 9 (484 aa).

The N-terminal stretch at 1-21 is a signal peptide; that stretch reads MTSLFFFVLLFSSLLISNGDA. Residue Asp-77 is the Nucleophile of the active site. Catalysis depends on residues His-402, Asp-453, and Glu-462.

Belongs to the glycosyl hydrolase 9 (cellulase E) family. Specifically expressed in root cap cells.

Its subcellular location is the secreted. It localises to the cell wall. It catalyses the reaction Endohydrolysis of (1-&gt;4)-beta-D-glucosidic linkages in cellulose, lichenin and cereal beta-D-glucans.. This chain is Endoglucanase 9 (CEL3), found in Arabidopsis thaliana (Mouse-ear cress).